A 232-amino-acid polypeptide reads, in one-letter code: MEQGAKEIPVVYLHDIRRQYTQGETKLTILDGTKLALWAGQSVALVAPSGSGKSTLLHIAGLLESPDAGEVYIGGTATSGLSDVERTRIRRTDIGFVYQSHRLLPEFTALENVMLPQMIRGLRRSETVKRAREILSYLGLEDRVTHRPAELSGGEQQRVAIARAVANAPRVLLADEPTGNLDPNTADHVFNALMQLVKATRVAMLIATHNMELADRMDRRVSLENGHVVELD.

The region spanning 11–231 is the ABC transporter domain; it reads VYLHDIRRQY…SLENGHVVEL (221 aa). Residue 47–54 participates in ATP binding; that stretch reads APSGSGKS.

This sequence belongs to the ABC transporter superfamily. Lipoprotein translocase (TC 3.A.1.125) family. The complex is composed of two ATP-binding proteins (LolD) and two transmembrane proteins (LolC and LolE).

The protein localises to the cell inner membrane. Functionally, part of the ABC transporter complex LolCDE involved in the translocation of mature outer membrane-directed lipoproteins, from the inner membrane to the periplasmic chaperone, LolA. Responsible for the formation of the LolA-lipoprotein complex in an ATP-dependent manner. The chain is Lipoprotein-releasing system ATP-binding protein LolD from Nitrobacter hamburgensis (strain DSM 10229 / NCIMB 13809 / X14).